The sequence spans 726 residues: Putative tyrosine-protein kinase AmsA (726 aa).

2 helical membrane passes run 32-52 (WMIVAVSVLFTLMGTLYSLFA) and 425-445 (ILIVAGSLILGLVVSVGLVLM).

This sequence belongs to the etk/wzc family.

It is found in the cell inner membrane. The catalysed reaction is L-tyrosyl-[protein] + ATP = O-phospho-L-tyrosyl-[protein] + ADP + H(+). It participates in glycan metabolism; exopolysaccharide biosynthesis. Functionally, involved in the biosynthesis of amylovoran which functions as a virulence factor. In Erwinia amylovora (Fire blight bacteria), this protein is Putative tyrosine-protein kinase AmsA (amsA).